The following is a 273-amino-acid chain: Putative pyruvate, phosphate dikinase regulatory protein (273 aa).

153–160 (GVSRTSKT) provides a ligand contact to ADP.

Belongs to the pyruvate, phosphate/water dikinase regulatory protein family. PDRP subfamily.

The catalysed reaction is N(tele)-phospho-L-histidyl/L-threonyl-[pyruvate, phosphate dikinase] + ADP = N(tele)-phospho-L-histidyl/O-phospho-L-threonyl-[pyruvate, phosphate dikinase] + AMP + H(+). It carries out the reaction N(tele)-phospho-L-histidyl/O-phospho-L-threonyl-[pyruvate, phosphate dikinase] + phosphate + H(+) = N(tele)-phospho-L-histidyl/L-threonyl-[pyruvate, phosphate dikinase] + diphosphate. Functionally, bifunctional serine/threonine kinase and phosphorylase involved in the regulation of the pyruvate, phosphate dikinase (PPDK) by catalyzing its phosphorylation/dephosphorylation. This is Putative pyruvate, phosphate dikinase regulatory protein from Rhizobium meliloti (strain 1021) (Ensifer meliloti).